We begin with the raw amino-acid sequence, 262 residues long: Tryptophan synthase alpha chain (262 aa).

Active-site proton acceptor residues include E48 and D59.

It belongs to the TrpA family. In terms of assembly, tetramer of two alpha and two beta chains.

The catalysed reaction is (1S,2R)-1-C-(indol-3-yl)glycerol 3-phosphate + L-serine = D-glyceraldehyde 3-phosphate + L-tryptophan + H2O. It participates in amino-acid biosynthesis; L-tryptophan biosynthesis; L-tryptophan from chorismate: step 5/5. In terms of biological role, the alpha subunit is responsible for the aldol cleavage of indoleglycerol phosphate to indole and glyceraldehyde 3-phosphate. The polypeptide is Tryptophan synthase alpha chain (Helicobacter pylori (strain P12)).